The primary structure comprises 550 residues: Acyl-CoA-dependent acyltransferase MAC2 (550 aa).

Belongs to the trichothecene O-acetyltransferase family.

It functions in the pathway secondary metabolite biosynthesis. Acyl-CoA-dependent acyltransferase; part of the gene cluster that mediates the biosynthesis of mannosylerythritol lipids (MELs), surface-active substances that enhance the availability of water-insoluble substrates. Depending on the number of acetyl groups, mannosylerythritol lipids can be differentiated into MEL A (fully acetylated), MEL B and MEL C (monoacetylated at R-6 and R-4, respectively), and the fully deacetylated MEL D. The first step in the pathway is the generation of mannosylerythritol by the glycosyltransferase EMT1 which catalyzes the transfer of GDP-mannose to the C-4 atom of meso-erythritol. This reaction has to be stereospecific, since only mannosyl-D-erythritol is generated. The produced disaccharide is subsequently acylated with fatty acids of various lengths by the acyltransferases MAC1 and MAC2 at positions C-2 and C-3, repectively. The existence of MEL derivatives which carry an acetyl group at C-2 implies that at least MAC1 also accepts acetyl-CoA as a donor. The final step of MEL biosynthesis is the acetylation of the fully acylated mannosylerythritol lipids catalyzed by the acetyl-CoA-dependent acetyltransferase MAT1. MAT1 displays a relaxed regioselectivity and is able to transfer acetylgroups to both positions C-4 and C-6 of the mannosyl moiety. The chain is Acyl-CoA-dependent acyltransferase MAC2 from Pseudozyma antarctica (strain T-34) (Yeast).